The primary structure comprises 292 residues: MHPARPALWAAALTALTLLRGPPVARAGAGAVGAGPVVRCEPCDARALSQCAPPPTAPACTELVREPGCGCCLTCALREGDACGVYTERCGTGLRCQPRPAEQYPLRALLNGRGFCANASAAGSLSTYLPSQPAPGNISESEEEHNAGSVESQVVPSTHRVTDSKFHPLHAKMDVIKKGHARDSQRYKVDYESQSTDTQNFSSESKRETEYGPCRREMEDTLNHLKFLNVLSPRGVHIPNCDKKGFYKKKQCRPSKGRKRGFCWCVDKYGQPLPGYDTKGKDDVHCLSVQSQ.

A signal peptide spans 1–27; sequence MHPARPALWAAALTALTLLRGPPVARA. An IGFBP N-terminal domain is found at 36–119; it reads PVVRCEPCDA…LNGRGFCANA (84 aa). 6 cysteine pairs are disulfide-bonded: cysteine 40/cysteine 69, cysteine 43/cysteine 71, cysteine 51/cysteine 72, cysteine 60/cysteine 75, cysteine 83/cysteine 96, and cysteine 90/cysteine 116. Residues asparagine 118 and asparagine 137 are each glycosylated (N-linked (GlcNAc...) asparagine). 2 disordered regions span residues 128–152 and 178–212; these read YLPS…SVES and KGHA…TEYG. At serine 149 the chain carries Phosphoserine. A compositionally biased stretch (basic and acidic residues) spans 178-191; the sequence is KGHARDSQRYKVDY. The segment covering 192 to 203 has biased composition (polar residues); that stretch reads ESQSTDTQNFSS. N-linked (GlcNAc...) asparagine glycosylation occurs at asparagine 200. Serine 202 carries the phosphoserine modification. The 76-residue stretch at 211–286 folds into the Thyroglobulin type-1 domain; it reads YGPCRREMED…DTKGKDDVHC (76 aa). Disulfide bonds link cysteine 214–cysteine 241, cysteine 252–cysteine 263, and cysteine 265–cysteine 286.

In terms of assembly, interacts with XLKD1. Binds IGF2 more than IGF1. Forms a ternary complex of about 140 to 150 kDa with IGF1 or IGF2 and a 85 kDa glycoprotein (ALS). Interacts with TMEM219. Phosphorylated by FAM20C in the extracellular medium.

The protein resides in the secreted. IGF-binding proteins prolong the half-life of the IGFs and have been shown to either inhibit or stimulate the growth promoting effects of the IGFs on cell culture. They alter the interaction of IGFs with their cell surface receptors. Also exhibits IGF-independent antiproliferative and apoptotic effects mediated by its receptor TMEM219/IGFBP-3R. Promotes testicular germ cell apoptosis. This is Insulin-like growth factor-binding protein 3 (Igfbp3) from Mus musculus (Mouse).